The chain runs to 306 residues: HTH-type transcriptional regulator AlkR (306 aa).

The 99-residue stretch at 207–305 (SNALAAIHAY…EQSPKHYRQQ (99 aa)) folds into the HTH araC/xylS-type domain. DNA-binding regions (H-T-H motif) lie at residues 224–245 (ESLA…QSIV) and 272–295 (IQQI…KRQF).

Its pathway is hydrocarbon metabolism; alkane degradation. In terms of biological role, this protein activates the expression of the alkane 1-monooxygenase AlkM. In Acinetobacter baylyi (strain ATCC 33305 / BD413 / ADP1), this protein is HTH-type transcriptional regulator AlkR (alkR).